The primary structure comprises 335 residues: UPF0353 protein MMAR_2288 (335 aa).

A run of 2 helical transmembrane segments spans residues 18–38 and 67–87; these read WFFLFIFVIAGLIAVYVVLQL and IPAMLLALSLVLFTVAMAGPT. The 197-residue stretch at 98 to 294 folds into the VWFA domain; that stretch reads VVMLVIDVSQ…AELNSVYASL (197 aa). The helical transmembrane segment at 309–329 threads the bilayer; sequence MGWLRLGALVLVAAALAALLI.

Belongs to the UPF0353 family.

It localises to the cell membrane. The protein is UPF0353 protein MMAR_2288 of Mycobacterium marinum (strain ATCC BAA-535 / M).